A 763-amino-acid chain; its full sequence is ATP-dependent RNA helicase SUPV3L1, mitochondrial (763 aa).

The transit peptide at 1 to 65 directs the protein to the mitochondrion; the sequence is MSVNRCIYLL…RPLDTSLFIP (65 aa). A disordered region spans residues 39-58; sequence RRTFDKLSTRHSSSGSSRPL. Residues 192-332 enclose the Helicase ATP-binding domain; sequence EARAIQRKIV…AVDFITELMF (141 aa). 205 to 212 provides a ligand contact to ATP; that stretch reads GPTNSGKT. In terms of domain architecture, Helicase C-terminal spans 354 to 519; that stretch reads HAVESLDNLK…PTAEQIEMFA (166 aa). Disordered regions lie at residues 679-721 and 742-763; these read DSQP…KSSL and EWAR…RKKK. A compositionally biased stretch (polar residues) spans 680-697; that stretch reads SQPTDTESNSSSTVPESE.

This sequence belongs to the helicase family. Requires Mg(2+) as cofactor. Mn(2+) serves as cofactor.

The protein localises to the nucleus. Its subcellular location is the mitochondrion matrix. It localises to the mitochondrion nucleoid. It catalyses the reaction ATP + H2O = ADP + phosphate + H(+). Functionally, major helicase player in mitochondrial RNA metabolism. Component of the mitochondrial degradosome (mtEXO) complex, that degrades 3' overhang double-stranded RNA with a 3'-to-5' directionality in an ATP-dependent manner. ATPase and ATP-dependent multisubstrate helicase, able to unwind double-stranded (ds) DNA and RNA, and RNA/DNA heteroduplexes in the 5'-to-3' direction. Plays a role in the RNA surveillance system in mitochondria; regulates the stability of mature mRNAs, the removal of aberrantly formed mRNAs and the rapid degradation of non coding processing intermediates. Also implicated in recombination and chromatin maintenance pathways. May protect cells from apoptosis. Associates with mitochondrial DNA. The protein is ATP-dependent RNA helicase SUPV3L1, mitochondrial (supv3l1) of Danio rerio (Zebrafish).